Here is a 337-residue protein sequence, read N- to C-terminus: Anthranilate phosphoribosyltransferase (337 aa).

5-phospho-alpha-D-ribose 1-diphosphate is bound by residues glycine 81, glycine 84–aspartate 85, serine 89, asparagine 91–threonine 94, lysine 109–serine 117, and alanine 121. Glycine 81 contributes to the anthranilate binding site. Serine 93 serves as a coordination point for Mg(2+). Residue asparagine 112 participates in anthranilate binding. Anthranilate is bound at residue arginine 167. Mg(2+) is bound by residues aspartate 226 and glutamate 227.

The protein belongs to the anthranilate phosphoribosyltransferase family. In terms of assembly, homodimer. The cofactor is Mg(2+).

It catalyses the reaction N-(5-phospho-beta-D-ribosyl)anthranilate + diphosphate = 5-phospho-alpha-D-ribose 1-diphosphate + anthranilate. It functions in the pathway amino-acid biosynthesis; L-tryptophan biosynthesis; L-tryptophan from chorismate: step 2/5. Its function is as follows. Catalyzes the transfer of the phosphoribosyl group of 5-phosphorylribose-1-pyrophosphate (PRPP) to anthranilate to yield N-(5'-phosphoribosyl)-anthranilate (PRA). In Bradyrhizobium diazoefficiens (strain JCM 10833 / BCRC 13528 / IAM 13628 / NBRC 14792 / USDA 110), this protein is Anthranilate phosphoribosyltransferase.